The chain runs to 319 residues: tRNA uridine(34) hydroxylase (319 aa).

Positions 123–221 constitute a Rhodanese domain; the sequence is GDPDVVVIDT…YLETIPPEQS (99 aa). The active-site Cysteine persulfide intermediate is Cys181. The disordered stretch occupies residues 298 to 319; sequence ARQQVHIGASPEPKAMPATAGR.

It belongs to the TrhO family.

It carries out the reaction uridine(34) in tRNA + AH2 + O2 = 5-hydroxyuridine(34) in tRNA + A + H2O. In terms of biological role, catalyzes oxygen-dependent 5-hydroxyuridine (ho5U) modification at position 34 in tRNAs. This Albidiferax ferrireducens (strain ATCC BAA-621 / DSM 15236 / T118) (Rhodoferax ferrireducens) protein is tRNA uridine(34) hydroxylase.